The chain runs to 483 residues: Zinc metalloproteinase/disintegrin (483 aa).

The signal sequence occupies residues 1–20 (MIQVLLVTICLAVFPYQGSS). The propeptide occupies 21–190 (IILESGNVND…KASQLYLTPE (170 aa)). Residues 197–395 (RYIELAIVVD…RNPQCILNAP (199 aa)) enclose the Peptidase M12B domain. Ca(2+) is bound at residue glutamate 200. Asparagine 263 carries N-linked (GlcNAc...) asparagine glycosylation. Aspartate 284 lines the Ca(2+) pocket. Asparagine 293 carries N-linked (GlcNAc...) asparagine glycosylation. Cystine bridges form between cysteine 308–cysteine 390, cysteine 352–cysteine 374, and cysteine 354–cysteine 357. A Zn(2+)-binding site is contributed by histidine 333. Glutamate 334 is a catalytic residue. Histidine 337 and histidine 343 together coordinate Zn(2+). 2 residues coordinate Ca(2+): cysteine 390 and asparagine 393. The propeptide occupies 396 to 413 (LRTDTVSTPVSGNEFLEA). Positions 403-483 (TPVSGNEFLE…SNDCPRWNDL (81 aa)) constitute a Disintegrin domain. Cystine bridges form between cysteine 417–cysteine 432, cysteine 419–cysteine 427, cysteine 426–cysteine 449, cysteine 440–cysteine 446, cysteine 445–cysteine 470, and cysteine 458–cysteine 477. A Cell attachment site motif is present at residues 462–464 (RGD).

This sequence belongs to the venom metalloproteinase (M12B) family. P-II subfamily. P-IIa sub-subfamily. As to quaternary structure, monomeric (disintegrin). Zn(2+) is required as a cofactor. As to expression, expressed by the venom gland.

The protein resides in the secreted. Impairs hemostasis in the envenomed animal. Functionally, inhibits platelet aggregation induced by ADP, thrombin, platelet-activating factor and collagen. Acts by inhibiting fibrinogen interaction with platelet receptors GPIIb/GPIIIa (ITGA2B/ITGB3). The polypeptide is Zinc metalloproteinase/disintegrin (Protobothrops flavoviridis (Habu)).